Consider the following 129-residue polypeptide: Prefoldin subunit 6 (129 aa).

An N-acetylalanine modification is found at Ala2. Lys21 bears the N6-acetyllysine mark. The residue at position 66 (Lys66) is an N6-acetyllysine; alternate. Lys66 is covalently cross-linked (Glycyl lysine isopeptide (Lys-Gly) (interchain with G-Cter in SUMO1); alternate). Lys66 participates in a covalent cross-link: Glycyl lysine isopeptide (Lys-Gly) (interchain with G-Cter in SUMO2); alternate.

Belongs to the prefoldin subunit beta family. Heterohexamer of two PFD-alpha type and four PFD-beta type subunits. Component of the PAQosome complex which is responsible for the biogenesis of several protein complexes and which consists of R2TP complex members RUVBL1, RUVBL2, RPAP3 and PIH1D1, URI complex members PFDN2, PFDN6, PDRG1, UXT and URI1 as well as ASDURF, POLR2E and DNAAF10/WDR92.

Functionally, binds specifically to cytosolic chaperonin (c-CPN) and transfers target proteins to it. Binds to nascent polypeptide chain and promotes folding in an environment in which there are many competing pathways for nonnative proteins. In Homo sapiens (Human), this protein is Prefoldin subunit 6 (PFDN6).